The sequence spans 346 residues: MKFIQNNREATALLAIVCLFVFPGALDSQYLSVQTLTMVFSSAQILMLLAIGATMVMLTRNIDVSVGSTTGMCAVLLGVMLNAGYSLPVACLATLILGIVAGFFNGVLVAWLKIPAIVATLGTLGLYRGIMLLWTGGKWIEGLPAGLKQLSAPVFLGISAIGWFTLVLALLMAWLLAKTAFGRNFYATGDNLQGARQLGVRTEMVRIMAFSLNGGMAALAGIVFASQIGFIPNQTGTGLEMKAIAACVLGGISLLGGSGTVIGAILGAYFLTQIDSVLVLLRIPAWWNDFIAGLVLLGVLVFDGRLRCALQRNLRRQKYARFISPPTPLQAEAKTHAQQNKNKEVA.

Transmembrane regions (helical) follow at residues 13-33 (LLAIVCLFVFPGALDSQYLSV), 38-58 (MVFSSAQILMLLAIGATMVML), 71-91 (GMCAVLLGVMLNAGYSLPVAC), 92-112 (LATLILGIVAGFFNGVLVAWL), 114-134 (IPAIVATLGTLGLYRGIMLLW), 154-174 (VFLGISAIGWFTLVLALLMAW), 212-232 (LNGGMAALAGIVFASQIGFIP), 248-268 (VLGGISLLGGSGTVIGAILGA), and 283-303 (IPAWWNDFIAGLVLLGVLVFD).

This sequence belongs to the binding-protein-dependent transport system permease family. AraH/RbsC subfamily. As to quaternary structure, the complex is composed of two ATP-binding proteins (LsrA), two transmembrane proteins (LsrC and LsrD) and a solute-binding protein (LsrB).

The protein localises to the cell inner membrane. Its function is as follows. Part of the ABC transporter complex LsrABCD involved in autoinducer 2 (AI-2) import. Probably responsible for the translocation of the substrate across the membrane. The chain is Autoinducer 2 import system permease protein LsrC (lsrC) from Salmonella paratyphi B (strain ATCC BAA-1250 / SPB7).